The sequence spans 438 residues: MLKYDKNIQSVRGMHDYLPKDTILWQYIENILITILDSYGYKEIRFPIIEDTNLFKRSIGEVTDVIEKEMYNFTDRNGNNLTLRPEGTSGCVRAGIKHGLFYHQEQRLWYLGPMFRYERPQKGRYRQFHQFSAEAFGQIGPDIDAELILITARCWKKLGINHHLSLELNSIGSLSSRINYRKKLITFLEKNLSNLDSNALRRLYSNPLRILDTKNTKTKELLLNAPILSDYLDDDSRVHFSELCQLLNLLGVPYRVNPYLVRGLDYYNKTVFEWVTDSLGVKKTICAGGRYDELVQELGGYSAPAIGFSIGLERVILLIQEINNISILHKNIYIDVYFISIGDNSRKHAMLLSENIRSTLPSLRLMVHHGGDDIKKQFYCANKHKPQIVLIMNEKNALDKTIILKNLQSKTQEILKHDAVSERLKHILHITCNSTDNK.

This sequence belongs to the class-II aminoacyl-tRNA synthetase family. As to quaternary structure, homodimer.

It localises to the cytoplasm. It catalyses the reaction tRNA(His) + L-histidine + ATP = L-histidyl-tRNA(His) + AMP + diphosphate + H(+). The protein is Histidine--tRNA ligase of Blochmanniella pennsylvanica (strain BPEN).